A 1854-amino-acid polypeptide reads, in one-letter code: Calcium-channel protein cch1 (1854 aa).

A compositionally biased stretch (low complexity) spans 1–15; the sequence is MSSSSNSDPSSSPDN. The segment at 1–33 is disordered; the sequence is MSSSSNSDPSSSPDNTDFIPLKDNPKDTSSYIN. A glycan (N-linked (GlcNAc...) asparagine) is linked at N40. Helical transmembrane passes span 184 to 204, 220 to 240, and 274 to 294; these read HPLY…LLMI, IIVI…LFGF, and DFVA…QGIF. N310 carries N-linked (GlcNAc...) asparagine glycosylation. The next 8 helical transmembrane spans lie at 328–348, 427–447, 461–481, 514–534, 549–569, 581–601, 606–626, and 642–662; these read PLVQ…ILGV, FFNS…TDIM, LFII…IAVV, YLFY…VTLC, LIFY…RFFA, YTNL…LPSI, VAFG…ILLI, and QLLN…LCAV. Residue N699 is glycosylated (N-linked (GlcNAc...) asparagine). A helical transmembrane segment spans residues 723 to 743; sequence FFTLWFLFSNNVVLSMFIAVI. Residue N786 is glycosylated (N-linked (GlcNAc...) asparagine). 3 helical membrane passes run 946-966, 980-1000, and 1021-1041; these read VFIY…TPIY, FVWT…IKII, and FFVL…HALL. N1058 is a glycosylation site (N-linked (GlcNAc...) asparagine). 2 consecutive transmembrane segments (helical) span residues 1075 to 1095 and 1148 to 1168; these read FFKI…FALW and FPHA…VDIM. N1184 carries an N-linked (GlcNAc...) asparagine glycan. The next 4 membrane-spanning stretches (helical) occupy residues 1193-1213, 1274-1294, 1302-1322, and 1331-1351; these read FVLF…AIII, FTGL…PCPI, SIFL…VYGL, and FWNM…IAIL. N1356 carries an N-linked (GlcNAc...) asparagine glycan. A run of 3 helical transmembrane segments spans residues 1358-1378, 1393-1413, and 1486-1506; these read SLTL…IPKF, PSIF…AIAF, and FIAW…TVVF. N-linked (GlcNAc...) asparagine glycans are attached at residues N1508 and N1773. Positions 1764 to 1792 are disordered; sequence TIASGEGDDNHSVEDHLKVPTDNEPRRSP. Positions 1771-1790 are enriched in basic and acidic residues; it reads DDNHSVEDHLKVPTDNEPRR.

The protein belongs to the calcium channel alpha-1 subunit (TC 1.A.1.11) family. As to quaternary structure, interacts with yam8 to form a Ca(2+) influx channel.

The protein resides in the cell membrane. Functionally, voltage-gated, high-affinity calcium channel that functions together with yam8 to mediate calcium entry into cells. Required during conditions of environmental stress. The sequence is that of Calcium-channel protein cch1 (cch1) from Schizosaccharomyces pombe (strain 972 / ATCC 24843) (Fission yeast).